A 170-amino-acid chain; its full sequence is UPF0316 protein CLJ_B0679 (170 aa).

2 consecutive transmembrane segments (helical) span residues 1-21 (MLSY…LMTI) and 36-56 (IIGF…LSGI).

It belongs to the UPF0316 family.

It localises to the cell membrane. The chain is UPF0316 protein CLJ_B0679 from Clostridium botulinum (strain 657 / Type Ba4).